Here is a 144-residue protein sequence, read N- to C-terminus: Large ribosomal subunit protein uL15 (144 aa).

Residues Met-1–Arg-48 are disordered.

The protein belongs to the universal ribosomal protein uL15 family. As to quaternary structure, part of the 50S ribosomal subunit.

Binds to the 23S rRNA. This Chlamydia caviae (strain ATCC VR-813 / DSM 19441 / 03DC25 / GPIC) (Chlamydophila caviae) protein is Large ribosomal subunit protein uL15.